Here is a 214-residue protein sequence, read N- to C-terminus: Probable transaldolase (214 aa).

Lys83 acts as the Schiff-base intermediate with substrate in catalysis.

It belongs to the transaldolase family. Type 3B subfamily.

It is found in the cytoplasm. The catalysed reaction is D-sedoheptulose 7-phosphate + D-glyceraldehyde 3-phosphate = D-erythrose 4-phosphate + beta-D-fructose 6-phosphate. It participates in carbohydrate degradation; pentose phosphate pathway; D-glyceraldehyde 3-phosphate and beta-D-fructose 6-phosphate from D-ribose 5-phosphate and D-xylulose 5-phosphate (non-oxidative stage): step 2/3. Functionally, transaldolase is important for the balance of metabolites in the pentose-phosphate pathway. The chain is Probable transaldolase from Geotalea daltonii (strain DSM 22248 / JCM 15807 / FRC-32) (Geobacter daltonii).